The sequence spans 386 residues: Succinate--CoA ligase [ADP-forming] subunit beta (386 aa).

Residues 9–244 (KDILRQFGVP…LDEEDPAEVE (236 aa)) enclose the ATP-grasp domain. ATP contacts are provided by residues Lys-46, 53–55 (GRG), Glu-99, Ala-102, and Glu-107. Residues Asn-199 and Asp-213 each contribute to the Mg(2+) site. Substrate contacts are provided by residues Asn-264 and 321–323 (GIM).

The protein belongs to the succinate/malate CoA ligase beta subunit family. In terms of assembly, heterotetramer of two alpha and two beta subunits. It depends on Mg(2+) as a cofactor.

The enzyme catalyses succinate + ATP + CoA = succinyl-CoA + ADP + phosphate. It carries out the reaction GTP + succinate + CoA = succinyl-CoA + GDP + phosphate. Its pathway is carbohydrate metabolism; tricarboxylic acid cycle; succinate from succinyl-CoA (ligase route): step 1/1. Functionally, succinyl-CoA synthetase functions in the citric acid cycle (TCA), coupling the hydrolysis of succinyl-CoA to the synthesis of either ATP or GTP and thus represents the only step of substrate-level phosphorylation in the TCA. The beta subunit provides nucleotide specificity of the enzyme and binds the substrate succinate, while the binding sites for coenzyme A and phosphate are found in the alpha subunit. In Delftia acidovorans (strain DSM 14801 / SPH-1), this protein is Succinate--CoA ligase [ADP-forming] subunit beta.